The chain runs to 657 residues: Forkhead box protein O3 (657 aa).

2 disordered regions span residues 1–71 (MAEA…EGAA) and 216–320 (SSWW…ELDD). Positions 142–236 (WGNMSYADLI…KGGKAPRRRA (95 aa)) form a DNA-binding region, fork-head. Residues 246-257 (TKSRGRAAKKKA) are compositionally biased toward basic residues. Polar residues predominate over residues 268–283 (DSPSQLSKWPGSPTSR). Residues 284–296 (SSDKLDTWTDFRS) are compositionally biased toward basic and acidic residues. A compositionally biased stretch (polar residues) spans 297–307 (RTNSNASTISG).

Post-translationally, dephosphorylation may promote translocation to the nucleus where the protein induces transcription of target genes and triggers apoptosis. As to expression, localized to the animal hemisphere during early cleavage stages. At the late neurula, localized in the anterior neural plate, neural crest cells and in the hatching gland. As development progresses, expression becomes less localized, being observed in a variety of organs and tissues including the head, branchial arches and somites by stage 32.

The protein resides in the cytoplasm. It is found in the cytosol. The protein localises to the nucleus. In terms of biological role, transcriptional activator that recognizes and binds to the DNA sequence 5'-[AG]TAAA[TC]A-3' and regulates different processes, such as apoptosis and autophagy. Acts as a positive regulator of autophagy in skeletal muscle: in starved cells, enters the nucleus following dephosphorylation and binds the promoters of autophagy genes, thereby activating their expression, resulting in proteolysis of skeletal muscle proteins. Triggers apoptosis in the absence of survival factors, including neuronal cell death upon oxidative stress. In response to metabolic stress, translocates into the mitochondria where it promotes mtDNA transcription. Also acts as a key regulator of chondrogenic commitment of skeletal progenitor cells in response to lipid availability: when lipids levels are low, translocates to the nucleus and promotes expression of sox9, which induces chondrogenic commitment and suppresses fatty acid oxidation. Also acts as a key regulator of regulatory T-cells (Treg) differentiation. The protein is Forkhead box protein O3 of Xenopus laevis (African clawed frog).